The following is a 214-amino-acid chain: Large ribosomal subunit protein bL25 (214 aa).

The protein belongs to the bacterial ribosomal protein bL25 family. CTC subfamily. As to quaternary structure, part of the 50S ribosomal subunit; part of the 5S rRNA/L5/L18/L25 subcomplex. Contacts the 5S rRNA. Binds to the 5S rRNA independently of L5 and L18.

Functionally, this is one of the proteins that binds to the 5S RNA in the ribosome where it forms part of the central protuberance. The polypeptide is Large ribosomal subunit protein bL25 (Polynucleobacter necessarius subsp. necessarius (strain STIR1)).